The sequence spans 209 residues: Kynurenine formamidase (209 aa).

Residue Trp-20 coordinates substrate. Zn(2+)-binding residues include His-50, His-54, and Asp-56. Residue His-60 is the Proton donor/acceptor of the active site. Zn(2+) contacts are provided by His-161 and Glu-173.

This sequence belongs to the Cyclase 1 superfamily. KynB family. In terms of assembly, homodimer. Zn(2+) serves as cofactor.

The catalysed reaction is N-formyl-L-kynurenine + H2O = L-kynurenine + formate + H(+). Its pathway is amino-acid degradation; L-tryptophan degradation via kynurenine pathway; L-kynurenine from L-tryptophan: step 2/2. Functionally, catalyzes the hydrolysis of N-formyl-L-kynurenine to L-kynurenine, the second step in the kynurenine pathway of tryptophan degradation. The chain is Kynurenine formamidase from Bacillus cereus (strain ATCC 10987 / NRS 248).